Here is a 216-residue protein sequence, read N- to C-terminus: Cytidylate kinase (216 aa).

10-18 lines the ATP pocket; sequence GPAGAGKST.

This sequence belongs to the cytidylate kinase family. Type 1 subfamily.

Its subcellular location is the cytoplasm. The enzyme catalyses CMP + ATP = CDP + ADP. It carries out the reaction dCMP + ATP = dCDP + ADP. The protein is Cytidylate kinase of Clostridioides difficile (strain 630) (Peptoclostridium difficile).